An 89-amino-acid chain; its full sequence is Small ribosomal subunit protein bS20 (89 aa).

It belongs to the bacterial ribosomal protein bS20 family.

In terms of biological role, binds directly to 16S ribosomal RNA. This is Small ribosomal subunit protein bS20 from Hahella chejuensis (strain KCTC 2396).